A 1025-amino-acid chain; its full sequence is DNA polymerase (1025 aa).

The protein belongs to the DNA polymerase type-B family.

The catalysed reaction is DNA(n) + a 2'-deoxyribonucleoside 5'-triphosphate = DNA(n+1) + diphosphate. Functionally, replicates the viral genome. Host DNA polymerases cannot substitute for the viral enzyme in this process. The sequence is that of DNA polymerase from Noctuidae (owlet moths).